The chain runs to 225 residues: ATP-dependent dethiobiotin synthetase BioD 1 (225 aa).

Position 13–18 (13–18 (EVGKTV)) interacts with ATP. T17 contributes to the Mg(2+) binding site. K38 is a catalytic residue. S42 is a binding site for substrate. ATP contacts are provided by residues D55, 116–119 (EGAG), 176–177 (ND), 205–207 (PWL), and E212. Mg(2+)-binding residues include D55 and E116.

Belongs to the dethiobiotin synthetase family. In terms of assembly, homodimer. The cofactor is Mg(2+).

Its subcellular location is the cytoplasm. It carries out the reaction (7R,8S)-7,8-diammoniononanoate + CO2 + ATP = (4R,5S)-dethiobiotin + ADP + phosphate + 3 H(+). Its pathway is cofactor biosynthesis; biotin biosynthesis; biotin from 7,8-diaminononanoate: step 1/2. Its function is as follows. Catalyzes a mechanistically unusual reaction, the ATP-dependent insertion of CO2 between the N7 and N8 nitrogen atoms of 7,8-diaminopelargonic acid (DAPA, also called 7,8-diammoniononanoate) to form a ureido ring. This Escherichia coli O157:H7 protein is ATP-dependent dethiobiotin synthetase BioD 1.